Here is a 366-residue protein sequence, read N- to C-terminus: Pyrimidine monooxygenase RutA (366 aa).

Residues 49-50 (IK), Asn-115, Glu-124, 140-141 (RY), and Ser-190 each bind FMN.

It belongs to the NtaA/SnaA/DszA monooxygenase family. RutA subfamily.

The catalysed reaction is uracil + FMNH2 + NADH + O2 = (Z)-3-ureidoacrylate + FMN + NAD(+) + H2O + H(+). The enzyme catalyses thymine + FMNH2 + NADH + O2 = (Z)-2-methylureidoacrylate + FMN + NAD(+) + H2O + H(+). Functionally, catalyzes the pyrimidine ring opening between N-3 and C-4 by an unusual flavin hydroperoxide-catalyzed mechanism, adding oxygen atoms in the process to yield ureidoacrylate peracid, that immediately reacts with FMN forming ureidoacrylate and FMN-N(5)-oxide. The FMN-N(5)-oxide reacts spontaneously with NADH to produce FMN. Requires the flavin reductase RutF to regenerate FMN in vivo. This is Pyrimidine monooxygenase RutA from Serratia proteamaculans (strain 568).